Consider the following 936-residue polypeptide: 2-oxoglutarate dehydrogenase E1 component (936 aa).

Belongs to the alpha-ketoglutarate dehydrogenase family. As to quaternary structure, homodimer. Part of the 2-oxoglutarate dehydrogenase (OGDH) complex composed of E1 (2-oxoglutarate dehydrogenase), E2 (dihydrolipoamide succinyltransferase) and E3 (dihydrolipoamide dehydrogenase); the complex contains multiple copies of the three enzymatic components (E1, E2 and E3). The cofactor is thiamine diphosphate.

It carries out the reaction N(6)-[(R)-lipoyl]-L-lysyl-[protein] + 2-oxoglutarate + H(+) = N(6)-[(R)-S(8)-succinyldihydrolipoyl]-L-lysyl-[protein] + CO2. In terms of biological role, E1 component of the 2-oxoglutarate dehydrogenase (OGDH) complex which catalyzes the decarboxylation of 2-oxoglutarate, the first step in the conversion of 2-oxoglutarate to succinyl-CoA and CO(2). The sequence is that of 2-oxoglutarate dehydrogenase E1 component (sucA) from Rickettsia prowazekii (strain Madrid E).